Consider the following 487-residue polypeptide: GlcNAc-binding protein A (487 aa).

Residues 1–29 (MKKLPNKSLIALALLSVSGASFGHGYVSA) form the signal peptide. The Chitin-binding type-4 domain maps to 30–201 (YENGVAEGRA…SFYNVIDVKF (172 aa)). Residues 438–479 (AGTKVLASDGAVYQCKEFPFSGYCTQWSPSATQFEPGKGSHW) form the Chitin-binding type-3 domain.

This sequence belongs to the GbpA family.

The protein resides in the secreted. Functionally, probably interacts with GlcNAc residues. May promote attachment to both epithelial cell surfaces and chitin. The protein is GlcNAc-binding protein A of Vibrio campbellii (strain ATCC BAA-1116).